The sequence spans 426 residues: NADH-quinone oxidoreductase subunit H 1 (426 aa).

Helical transmembrane passes span leucine 22–methionine 42, phenylalanine 91–isoleucine 111, isoleucine 124–glycine 144, methionine 163–leucine 183, phenylalanine 206–valine 226, leucine 258–tryptophan 278, phenylalanine 299–valine 319, alanine 331–proline 351, valine 357–tyrosine 377, and isoleucine 392–glycine 412.

This sequence belongs to the complex I subunit 1 family. NDH-1 is composed of 14 different subunits. Subunits NuoA, H, J, K, L, M, N constitute the membrane sector of the complex.

It is found in the cell inner membrane. It catalyses the reaction a quinone + NADH + 5 H(+)(in) = a quinol + NAD(+) + 4 H(+)(out). Its function is as follows. NDH-1 shuttles electrons from NADH, via FMN and iron-sulfur (Fe-S) centers, to quinones in the respiratory chain. The immediate electron acceptor for the enzyme in this species is believed to be ubiquinone. Couples the redox reaction to proton translocation (for every two electrons transferred, four hydrogen ions are translocated across the cytoplasmic membrane), and thus conserves the redox energy in a proton gradient. This subunit may bind ubiquinone. The sequence is that of NADH-quinone oxidoreductase subunit H 1 from Koribacter versatilis (strain Ellin345).